A 391-amino-acid polypeptide reads, in one-letter code: Phosphoglycerate kinase (391 aa).

Residues 21-23 (DLN), arginine 36, 59-62 (HRGR), arginine 113, and arginine 146 contribute to the substrate site. Residues lysine 197, glutamate 314, and 340-343 (GGDT) contribute to the ATP site.

Belongs to the phosphoglycerate kinase family. As to quaternary structure, monomer.

The protein resides in the cytoplasm. It catalyses the reaction (2R)-3-phosphoglycerate + ATP = (2R)-3-phospho-glyceroyl phosphate + ADP. Its pathway is carbohydrate degradation; glycolysis; pyruvate from D-glyceraldehyde 3-phosphate: step 2/5. The protein is Phosphoglycerate kinase of Ruthia magnifica subsp. Calyptogena magnifica.